The primary structure comprises 386 residues: 8-amino-7-oxononanoate synthase (386 aa).

Arg19 contacts substrate. Residue 106–107 (GY) coordinates pyridoxal 5'-phosphate. His131 contacts substrate. Pyridoxal 5'-phosphate contacts are provided by Ser177, His205, and Thr233. Lys236 is modified (N6-(pyridoxal phosphate)lysine). Thr350 contacts substrate.

It belongs to the class-II pyridoxal-phosphate-dependent aminotransferase family. BioF subfamily. In terms of assembly, homodimer. The cofactor is pyridoxal 5'-phosphate.

It catalyses the reaction 6-carboxyhexanoyl-[ACP] + L-alanine + H(+) = (8S)-8-amino-7-oxononanoate + holo-[ACP] + CO2. The protein operates within cofactor biosynthesis; biotin biosynthesis. Catalyzes the decarboxylative condensation of pimeloyl-[acyl-carrier protein] and L-alanine to produce 8-amino-7-oxononanoate (AON), [acyl-carrier protein], and carbon dioxide. The sequence is that of 8-amino-7-oxononanoate synthase from Alcanivorax borkumensis (strain ATCC 700651 / DSM 11573 / NCIMB 13689 / SK2).